Here is a 297-residue protein sequence, read N- to C-terminus: Large ribosomal subunit protein uL18 (297 aa).

At glycine 2 the chain carries N-acetylglycine. Residues lysine 5 and lysine 48 each carry the N6-acetyllysine modification. Serine 185 bears the Phosphoserine mark. Lysine 220 is modified (N6-acetyllysine; alternate). Lysine 220 is covalently cross-linked (Glycyl lysine isopeptide (Lys-Gly) (interchain with G-Cter in SUMO1); alternate). Lysine 220 is covalently cross-linked (Glycyl lysine isopeptide (Lys-Gly) (interchain with G-Cter in SUMO2); alternate). Threonine 232 is modified (phosphothreonine). Residues 253 to 297 (YEKKPKREVKKKRWNRPKMSLAQKKDRVAQKKASFLRAQERAAES) form a disordered region. The span at 258 to 268 (KREVKKKRWNR) shows a compositional bias: basic residues. Phosphoserine is present on serine 272.

It belongs to the universal ribosomal protein uL18 family. As to quaternary structure, component of the large ribosomal subunit (LSU). Part of the 5S RNP complex, which is a LSU subcomplex composed of the 5S RNA, RPL5 and RPL11. Component of a hexameric 5S RNP precursor complex, composed of 5S RNA, RRS1, RPF2/BXDC1, RPL5, RPL11 and HEATR3; this complex acts as a precursor for ribosome assembly. Interacts with NVL in an ATP-dependent manner. Interacts with RRP1B. Interacts with IPO5, IPO7 and KPNB1; these interactions may be involved in RPL5 nuclear import for the assembly of ribosomal subunits. Interacts with RRP1B.

It is found in the cytoplasm. Its subcellular location is the nucleus. The protein resides in the nucleolus. Functionally, component of the ribosome, a large ribonucleoprotein complex responsible for the synthesis of proteins in the cell. The small ribosomal subunit (SSU) binds messenger RNAs (mRNAs) and translates the encoded message by selecting cognate aminoacyl-transfer RNA (tRNA) molecules. The large subunit (LSU) contains the ribosomal catalytic site termed the peptidyl transferase center (PTC), which catalyzes the formation of peptide bonds, thereby polymerizing the amino acids delivered by tRNAs into a polypeptide chain. The nascent polypeptides leave the ribosome through a tunnel in the LSU and interact with protein factors that function in enzymatic processing, targeting, and the membrane insertion of nascent chains at the exit of the ribosomal tunnel. As part of the 5S RNP/5S ribonucleoprotein particle it is an essential component of the LSU, required for its formation and the maturation of rRNAs. It also couples ribosome biogenesis to p53/TP53 activation. As part of the 5S RNP it accumulates in the nucleoplasm and inhibits MDM2, when ribosome biogenesis is perturbed, mediating the stabilization and the activation of TP53. In Rattus norvegicus (Rat), this protein is Large ribosomal subunit protein uL18 (Rpl5).